Here is a 470-residue protein sequence, read N- to C-terminus: Light-independent protochlorophyllide reductase subunit N (470 aa).

C23, C48, and C108 together coordinate [4Fe-4S] cluster.

This sequence belongs to the BchN/ChlN family. Protochlorophyllide reductase is composed of three subunits; ChlL, ChlN and ChlB. Forms a heterotetramer of two ChlB and two ChlN subunits. [4Fe-4S] cluster is required as a cofactor.

It is found in the plastid. Its subcellular location is the chloroplast. It catalyses the reaction chlorophyllide a + oxidized 2[4Fe-4S]-[ferredoxin] + 2 ADP + 2 phosphate = protochlorophyllide a + reduced 2[4Fe-4S]-[ferredoxin] + 2 ATP + 2 H2O. It participates in porphyrin-containing compound metabolism; chlorophyll biosynthesis (light-independent). Component of the dark-operative protochlorophyllide reductase (DPOR) that uses Mg-ATP and reduced ferredoxin to reduce ring D of protochlorophyllide (Pchlide) to form chlorophyllide a (Chlide). This reaction is light-independent. The NB-protein (ChlN-ChlB) is the catalytic component of the complex. In Zygnema circumcarinatum (Green alga), this protein is Light-independent protochlorophyllide reductase subunit N.